The primary structure comprises 144 residues: Elicitor-responsive protein 3 (144 aa).

A C2 domain is found at 1–103 (MVQGTLEVLL…YTEGSIPPTV (103 aa)). 5 residues coordinate Ca(2+): aspartate 20, aspartate 26, aspartate 73, aspartate 75, and aspartate 81. Residues 123-144 (TPEDDRDRGLSEEDIGGWKQSS) are disordered.

The cofactor is Ca(2+).

This is Elicitor-responsive protein 3 (ERG3) from Oryza sativa subsp. indica (Rice).